A 216-amino-acid chain; its full sequence is 3-keto-L-gulonate-6-phosphate decarboxylase UlaD (216 aa).

Asp11 contributes to the substrate binding site. Mg(2+) is bound by residues Glu33 and Asp62. Substrate is bound at residue Arg192.

It belongs to the HPS/KGPDC family. KGPDC subfamily. As to quaternary structure, homodimer. Mg(2+) serves as cofactor.

It carries out the reaction 3-dehydro-L-gulonate 6-phosphate + H(+) = L-xylulose 5-phosphate + CO2. Its pathway is cofactor degradation; L-ascorbate degradation; D-xylulose 5-phosphate from L-ascorbate: step 2/4. Functionally, catalyzes the decarboxylation of 3-keto-L-gulonate-6-P into L-xylulose-5-P. Is involved in the anaerobic L-ascorbate utilization. The sequence is that of 3-keto-L-gulonate-6-phosphate decarboxylase UlaD from Salmonella typhi.